The following is a 380-amino-acid chain: Putative 8-amino-7-oxononanoate synthase (380 aa).

Arginine 18 contributes to the substrate binding site. 106 to 107 provides a ligand contact to pyridoxal 5'-phosphate; it reads GY. Histidine 131 contacts substrate. Residues serine 179, 205 to 208, and 236 to 239 contribute to the pyridoxal 5'-phosphate site; these read DEAH and TFGK. An N6-(pyridoxal phosphate)lysine modification is found at lysine 239. Residue threonine 352 coordinates substrate.

The protein belongs to the class-II pyridoxal-phosphate-dependent aminotransferase family. BioF subfamily. As to quaternary structure, homodimer. It depends on pyridoxal 5'-phosphate as a cofactor.

It carries out the reaction 6-carboxyhexanoyl-[ACP] + L-alanine + H(+) = (8S)-8-amino-7-oxononanoate + holo-[ACP] + CO2. It functions in the pathway cofactor biosynthesis; biotin biosynthesis. In terms of biological role, catalyzes the decarboxylative condensation of pimeloyl-[acyl-carrier protein] and L-alanine to produce 8-amino-7-oxononanoate (AON), [acyl-carrier protein], and carbon dioxide. The protein is Putative 8-amino-7-oxononanoate synthase (bioF) of Neisseria meningitidis serogroup C / serotype 2a (strain ATCC 700532 / DSM 15464 / FAM18).